The following is a 344-amino-acid chain: Outer membrane protein assembly factor BamC (344 aa).

The first 24 residues, 1–24 (MAYSVQKSRLAKVAGVSLVLLLAA), serve as a signal peptide directing secretion. Cys-25 is lipidated: N-palmitoyl cysteine. A lipid anchor (S-diacylglycerol cysteine) is attached at Cys-25.

This sequence belongs to the BamC family. As to quaternary structure, part of the Bam complex, which is composed of the outer membrane protein BamA, and four lipoproteins BamB, BamC, BamD and BamE. Forms a subcomplex with BamD and BamE. The Bam complex has the shape of a hat, with the BamA beta-barrel crown in the outer membrane and the periplasmic brim formed by the BamA POTRA domains and the 4 lipoproteins.

The protein localises to the cell outer membrane. In terms of biological role, part of the outer membrane protein assembly complex (Bam), which is involved in assembly and insertion of beta-barrel proteins into the outer membrane. Nonessential member of the complex that stabilizes the interaction between the essential proteins BamA and BamD. Efficient substrate folding and insertion into the outer membrane requires all 5 subunits. A lateral gate may open between the first and last strands of the BamA beta-barrel that allows substrate to insert into the outer membrane; comparison of the structures of complete and nearly complete Bam complexes show there is considerable movement of all 5 proteins. This is Outer membrane protein assembly factor BamC from Escherichia coli (strain K12).